Here is a 300-residue protein sequence, read N- to C-terminus: Acetyl-coenzyme A carboxylase carboxyl transferase subunit beta 2 (300 aa).

A CoA carboxyltransferase N-terminal domain is found at Val-26–Ala-294. Zn(2+) is bound by residues Cys-30, Cys-33, Cys-49, and Cys-51. Residues Cys-30–Cys-51 form a C4-type zinc finger.

This sequence belongs to the AccD/PCCB family. Acetyl-CoA carboxylase is a heterohexamer composed of biotin carboxyl carrier protein (AccB), biotin carboxylase (AccC) and two subunits each of ACCase subunit alpha (AccA) and ACCase subunit beta (AccD). The cofactor is Zn(2+).

The protein resides in the cytoplasm. It carries out the reaction N(6)-carboxybiotinyl-L-lysyl-[protein] + acetyl-CoA = N(6)-biotinyl-L-lysyl-[protein] + malonyl-CoA. It functions in the pathway lipid metabolism; malonyl-CoA biosynthesis; malonyl-CoA from acetyl-CoA: step 1/1. Its function is as follows. Component of the acetyl coenzyme A carboxylase (ACC) complex. Biotin carboxylase (BC) catalyzes the carboxylation of biotin on its carrier protein (BCCP) and then the CO(2) group is transferred by the transcarboxylase to acetyl-CoA to form malonyl-CoA. The sequence is that of Acetyl-coenzyme A carboxylase carboxyl transferase subunit beta 2 from Roseiflexus castenholzii (strain DSM 13941 / HLO8).